A 268-amino-acid polypeptide reads, in one-letter code: MRRIAVMGAAGRMGKILVEAVQQRAPLTGLTAAIVRPGSTLIGVDAGELASLGRIGVPLSGNLESVAEEFDVLIDFTLPEVMLKNLAFCRKAGKAMVIGTTGLDAAQKQLLAEAGKDIPIVFAANFSVGVNLSLKLLDMAARVLAEDADIEIIEAHHRHKIDAPSGTALRMGEVIANALDRDLQKVAVYGREGHTGARERETIGFATVRGGDVVGDHTVLFACEGERLEITHKASSRMTFAKGAVRAALWLDAREPGLYDMQDVLGLH.

8 to 13 (GAAGRM) is an NAD(+) binding site. Arginine 36 serves as a coordination point for NADP(+). Residues 99–101 (GTT) and 123–126 (AANF) each bind NAD(+). Residue histidine 156 is the Proton donor/acceptor of the active site. A (S)-2,3,4,5-tetrahydrodipicolinate-binding site is contributed by histidine 157. Catalysis depends on lysine 160, which acts as the Proton donor. Residue 166–167 (GT) coordinates (S)-2,3,4,5-tetrahydrodipicolinate.

Belongs to the DapB family.

Its subcellular location is the cytoplasm. The catalysed reaction is (S)-2,3,4,5-tetrahydrodipicolinate + NAD(+) + H2O = (2S,4S)-4-hydroxy-2,3,4,5-tetrahydrodipicolinate + NADH + H(+). It catalyses the reaction (S)-2,3,4,5-tetrahydrodipicolinate + NADP(+) + H2O = (2S,4S)-4-hydroxy-2,3,4,5-tetrahydrodipicolinate + NADPH + H(+). It participates in amino-acid biosynthesis; L-lysine biosynthesis via DAP pathway; (S)-tetrahydrodipicolinate from L-aspartate: step 4/4. Its function is as follows. Catalyzes the conversion of 4-hydroxy-tetrahydrodipicolinate (HTPA) to tetrahydrodipicolinate. This chain is 4-hydroxy-tetrahydrodipicolinate reductase, found in Pseudomonas fluorescens (strain Pf0-1).